We begin with the raw amino-acid sequence, 117 residues long: Flagellar transcriptional regulator FlhD (117 aa).

This sequence belongs to the FlhD family. Homodimer; disulfide-linked. Forms a heterohexamer composed of two FlhC and four FlhD subunits. Each FlhC binds a FlhD dimer, forming a heterotrimer, and a hexamer assembles by dimerization of two heterotrimers.

The protein localises to the cytoplasm. Functions in complex with FlhC as a master transcriptional regulator that regulates transcription of several flagellar and non-flagellar operons by binding to their promoter region. Activates expression of class 2 flagellar genes, including fliA, which is a flagellum-specific sigma factor that turns on the class 3 genes. Also regulates genes whose products function in a variety of physiological pathways. This chain is Flagellar transcriptional regulator FlhD, found in Erwinia amylovora (strain CFBP1430).